The following is a 104-amino-acid chain: Urease subunit beta (104 aa).

It belongs to the urease beta subunit family. As to quaternary structure, heterotrimer of UreA (gamma), UreB (beta) and UreC (alpha) subunits. Three heterotrimers associate to form the active enzyme.

It localises to the cytoplasm. The enzyme catalyses urea + 2 H2O + H(+) = hydrogencarbonate + 2 NH4(+). It participates in nitrogen metabolism; urea degradation; CO(2) and NH(3) from urea (urease route): step 1/1. The polypeptide is Urease subunit beta (Rhodococcus jostii (strain RHA1)).